A 445-amino-acid polypeptide reads, in one-letter code: Anthranilate N-benzoyltransferase protein 1 (445 aa).

Residues His164 and Asp392 each act as proton acceptor in the active site.

It belongs to the plant acyltransferase family. N-terminus is blocked.

It carries out the reaction anthranilate + benzoyl-CoA = N-benzoylanthranilate + CoA. Its pathway is phytoalexin biosynthesis; methoxydianthramide B biosynthesis. In terms of biological role, catalyzes the formation of N-benzoylanthranilate, in the course of methoxydianthramide B, a phytoalexin. Phytoalexins are produced in response to infection by parasites, and are essential for the expression of disease resistance. The protein is Anthranilate N-benzoyltransferase protein 1 (HCBT1) of Dianthus caryophyllus (Carnation).